Reading from the N-terminus, the 833-residue chain is Multiphosphoryl transfer protein 2 (833 aa).

One can recognise an HPr domain in the interval Ala-2–Cys-91. His-16 (tele-phosphohistidine intermediate; for HPr activity) is an active-site residue. A Phosphohistidine; by EI modification is found at His-16. Residues Leu-143–Asp-653 form a PTS EI region. His-301 (tele-phosphohistidine intermediate; for PTS EI activity) is an active-site residue. Position 301 is a phosphohistidine; by autocatalysis (His-301). Phosphoenolpyruvate contacts are provided by Arg-408 and Arg-444. Positions 543 and 567 each coordinate Mg(2+). Residues Asn-566 to Asp-567 and Arg-577 each bind phosphoenolpyruvate. Cys-614 functions as the Proton donor; for EI activity in the catalytic mechanism. The PTS EIIA type-2 domain maps to Pro-688–Glu-830. Residue His-750 is the Tele-phosphohistidine intermediate; for PTS EIIA activity of the active site. Position 750 is a phosphohistidine; by HPr (His-750).

This sequence belongs to the PEP-utilizing enzyme family. Requires Mg(2+) as cofactor.

The protein localises to the cytoplasm. The catalysed reaction is L-histidyl-[protein] + phosphoenolpyruvate = N(pros)-phospho-L-histidyl-[protein] + pyruvate. It catalyses the reaction D-fructose(out) + N(pros)-phospho-L-histidyl-[protein] = D-fructose 1-phosphate(in) + L-histidyl-[protein]. Multifunctional protein that includes general (non sugar-specific) and sugar-specific components of the phosphoenolpyruvate-dependent sugar phosphotransferase system (sugar PTS). This major carbohydrate active transport system catalyzes the phosphorylation of incoming sugar substrates concomitantly with their translocation across the cell membrane. The enzyme II FrwABC PTS system is involved in fructose transport. This is Multiphosphoryl transfer protein 2 from Escherichia coli (strain K12).